The chain runs to 359 residues: Putative ankyrin repeat protein R190 (359 aa).

ANK repeat units lie at residues 72–103 (RLME…DFRC), 105–133 (DCVI…DLNR), 142–173 (DEII…SISI), 203–234 (LGNL…DINN), 236–260 (HEYS…YGLI), 261–287 (IHDD…IGHK), and 288–317 (PSKQ…DLSD).

This Acanthamoeba polyphaga (Amoeba) protein is Putative ankyrin repeat protein R190.